A 425-amino-acid polypeptide reads, in one-letter code: Serine--tRNA ligase (425 aa).

L-serine is bound at residue 231-233; sequence TAE. Residue 262-264 participates in ATP binding; the sequence is RSE. Glu-285 contributes to the L-serine binding site. An ATP-binding site is contributed by 349 to 352; the sequence is EISS. Ser-385 contacts L-serine.

It belongs to the class-II aminoacyl-tRNA synthetase family. Type-1 seryl-tRNA synthetase subfamily. In terms of assembly, homodimer. The tRNA molecule binds across the dimer.

The protein localises to the cytoplasm. It catalyses the reaction tRNA(Ser) + L-serine + ATP = L-seryl-tRNA(Ser) + AMP + diphosphate + H(+). It carries out the reaction tRNA(Sec) + L-serine + ATP = L-seryl-tRNA(Sec) + AMP + diphosphate + H(+). The protein operates within aminoacyl-tRNA biosynthesis; selenocysteinyl-tRNA(Sec) biosynthesis; L-seryl-tRNA(Sec) from L-serine and tRNA(Sec): step 1/1. Catalyzes the attachment of serine to tRNA(Ser). Is also able to aminoacylate tRNA(Sec) with serine, to form the misacylated tRNA L-seryl-tRNA(Sec), which will be further converted into selenocysteinyl-tRNA(Sec). The sequence is that of Serine--tRNA ligase from Alkaliphilus oremlandii (strain OhILAs) (Clostridium oremlandii (strain OhILAs)).